The following is a 224-amino-acid chain: 2-C-methyl-D-erythritol 4-phosphate cytidylyltransferase (224 aa).

This sequence belongs to the IspD/TarI cytidylyltransferase family. IspD subfamily.

The enzyme catalyses 2-C-methyl-D-erythritol 4-phosphate + CTP + H(+) = 4-CDP-2-C-methyl-D-erythritol + diphosphate. It participates in isoprenoid biosynthesis; isopentenyl diphosphate biosynthesis via DXP pathway; isopentenyl diphosphate from 1-deoxy-D-xylulose 5-phosphate: step 2/6. Its function is as follows. Catalyzes the formation of 4-diphosphocytidyl-2-C-methyl-D-erythritol from CTP and 2-C-methyl-D-erythritol 4-phosphate (MEP). This Caldicellulosiruptor bescii (strain ATCC BAA-1888 / DSM 6725 / KCTC 15123 / Z-1320) (Anaerocellum thermophilum) protein is 2-C-methyl-D-erythritol 4-phosphate cytidylyltransferase.